The chain runs to 189 residues: Potassium-transporting ATPase KdpC subunit (189 aa).

Residues 10 to 30 (ITLVFCVFFSVFYILILWLFA) form a helical membrane-spanning segment.

It belongs to the KdpC family. In terms of assembly, the system is composed of three essential subunits: KdpA, KdpB and KdpC.

The protein localises to the cell inner membrane. Part of the high-affinity ATP-driven potassium transport (or Kdp) system, which catalyzes the hydrolysis of ATP coupled with the electrogenic transport of potassium into the cytoplasm. This subunit acts as a catalytic chaperone that increases the ATP-binding affinity of the ATP-hydrolyzing subunit KdpB by the formation of a transient KdpB/KdpC/ATP ternary complex. The chain is Potassium-transporting ATPase KdpC subunit from Bacteroides thetaiotaomicron (strain ATCC 29148 / DSM 2079 / JCM 5827 / CCUG 10774 / NCTC 10582 / VPI-5482 / E50).